Consider the following 322-residue polypeptide: NADH-cytochrome b5 reductase 2 (322 aa).

The helical transmembrane segment at 32 to 48 threads the bilayer; the sequence is LAPIYISVGLAGLGVGL. Residues 72–176 enclose the FAD-binding FR-type domain; sequence QGWVDLKLSE…KGPIPKYPWE (105 aa). 179–214 serves as a coordination point for FAD; sequence KHKHICLIAGGTGITPMYQLARQIFKNPEDQTKVTL.

The protein belongs to the flavoprotein pyridine nucleotide cytochrome reductase family. Requires FAD as cofactor.

The protein localises to the mitochondrion outer membrane. It carries out the reaction 2 Fe(III)-[cytochrome b5] + NADH = 2 Fe(II)-[cytochrome b5] + NAD(+) + H(+). In terms of biological role, may mediate the reduction of outer membrane cytochrome b5. The chain is NADH-cytochrome b5 reductase 2 (mcr1) from Aspergillus clavatus (strain ATCC 1007 / CBS 513.65 / DSM 816 / NCTC 3887 / NRRL 1 / QM 1276 / 107).